The chain runs to 474 residues: Phosphatidylserine synthase 2 (474 aa).

Over 1–62 (MLRSDVRRVA…DDGTNTFFWR (62 aa)) the chain is Lumenal. Residues 63 to 83 (AHTLTVLFILTCSLGYVTLLE) traverse the membrane as a helical segment. Residues 84–96 (ETPQDTAYNAKRG) lie on the Cytoplasmic side of the membrane. Residues 97–117 (IIASILVFLCFGVTQAKDGPF) traverse the membrane as a helical segment. Topologically, residues 118–126 (SRPHPAYWR) are lumenal. The chain crosses the membrane as a helical span at residues 127 to 147 (FWLCVSVVYELFLIFILFQTV). The Cytoplasmic segment spans residues 148 to 313 (HDGRQFMKFI…EWKPASSLRR (166 aa)). A helical transmembrane segment spans residues 314-334 (WLAVCGIIFVFLLAELNTFYL). A topological domain (lumenal) is located at residue Lys335. Residues 336-356 (FVLWMPPEHYLVLLRLVFFVN) traverse the membrane as a helical segment. Residues 357-376 (VGGVAMREIYDFMDDLKFHK) are Cytoplasmic-facing. Residues 377 to 397 (KLGQQAWMVAAITVTEFLIVV) form a helical membrane-spanning segment. Over 398–403 (KYDPYT) the chain is Lumenal. Residues 404–424 (ITLPLPFYVTQCWILGIVLVL) traverse the membrane as a helical segment. Topologically, residues 425 to 474 (TWTVWRFFIRDITLRYKEIRQQKQHRNEEEKSHRNGDVNSEKDTNKHKKH) are cytoplasmic. Residues 448–468 (QHRNEEEKSHRNGDVNSEKDT) are compositionally biased toward basic and acidic residues. Positions 448–474 (QHRNEEEKSHRNGDVNSEKDTNKHKKH) are disordered.

It belongs to the phosphatidyl serine synthase family.

Its subcellular location is the endoplasmic reticulum membrane. The catalysed reaction is a 1,2-diacyl-sn-glycero-3-phosphoethanolamine + L-serine = a 1,2-diacyl-sn-glycero-3-phospho-L-serine + ethanolamine. It catalyses the reaction 1-hexadecanoyl-2-(9Z-octadecenoyl)-sn-glycero-3-phosphoethanolamine + L-serine = 1-hexadecanoyl-2-(9Z-octadecenoyl)-sn-glycero-3-phospho-L-serine + ethanolamine. It carries out the reaction 1-hexadecanoyl-2-(4Z,7Z,10Z,13Z,16Z,19Z-docosahexaenoyl)-sn-glycero-3-phosphoethanolamine + L-serine = 1-hexadecanoyl-2-(4Z,7Z,10Z,13Z,16Z,19Z-docosahexaenoyl)-sn-glycero-3-phosphoserine + ethanolamine. The enzyme catalyses 1-octadecanoyl-2-(5Z,8Z,11Z,14Z)-eicosatetraenoyl-sn-glycero-3-phosphoethanolamine + L-serine = 1-octadecanoyl-2-(5Z,8Z,11Z,14Z)-eicosatetraenoyl-sn-glycero-3-phosphoserine + ethanolamine. The catalysed reaction is 1-octadecanoyl-2-(4Z,7Z,10Z,13Z,16Z,19Z-docosahexaenoyl)-sn-glycero-3-phosphoethanolamine + L-serine = 1-octadecanoyl-2-(4Z,7Z,10Z,13Z,16Z,19Z-docosahexaenoyl)-sn-glycero-3-phosphoserine + ethanolamine. It catalyses the reaction 1-(1Z-octadecenyl)-2-(4Z,7Z,10Z,13Z,16Z,19Z-docosahexaenoyl)-sn-glycero-3-phosphoethanolamine + L-serine = 1-(1Z-octadecenyl)-2-(4Z,7Z,10Z,13Z,16Z,19Z-docosahexaenoyl)-sn-glycero-3-phospho-L-serine + ethanolamine. It carries out the reaction 1-octadecanoyl-2-(9Z-octadecenoyl)-sn-glycero-3-phosphoethanolamine + L-serine = 1-octadecanoyl-2-(9Z-octadecenoyl)-sn-glycero-3-phospho-L-serine + ethanolamine. The enzyme catalyses 1-(1Z-octadecenyl)-2-(9Z-octadecenoyl)-sn-glycero-3-phosphoethanolamine + L-serine = 1-(1Z-octadecenyl)-2-(9Z-octadecenoyl)-sn-glycero-3-phospho-L-serine + ethanolamine. The catalysed reaction is 1-(1Z-octadecenyl)-2-(5Z,8Z,11Z,14Z- eicosatetraenoyl)-sn-glycero-3-phosphoethanolamine + L-serine = 1-(1Z-octadecenyl)-2-(5Z,8Z,11Z,14Z-eicosatetraenoyl)-sn-glycero-3-phospho-L-serine + ethanolamine. It participates in phospholipid metabolism; phosphatidylserine biosynthesis. Its function is as follows. Catalyzes a base-exchange reaction in which the polar head group of phosphatidylethanolamine (PE) or phosphatidylcholine (PC) is replaced by L-serine. Catalyzes the conversion of phosphatatidylethanolamine and does not act on phosphatidylcholine. Can utilize both phosphatidylethanolamine (PE) plasmalogen and diacyl PE as substrate and the latter is six times better utilized, indicating the importance of an ester linkage at the sn-1 position. Although it shows no sn-1 fatty acyl preference, exhibits significant preference towards docosahexaenoic acid (22:6n-3) compared with 18:1 or 20:4 at the sn-2 position. This chain is Phosphatidylserine synthase 2 (ptdss2), found in Xenopus tropicalis (Western clawed frog).